A 72-amino-acid polypeptide reads, in one-letter code: Crustacean hyperglycemic hormone (72 aa).

Gln-1 is modified (pyrrolidone carboxylic acid; partial). 3 disulfides stabilise this stretch: Cys-7/Cys-43, Cys-23/Cys-39, and Cys-26/Cys-52. Val-72 is modified (valine amide).

It belongs to the arthropod CHH/MIH/GIH/VIH hormone family. The N-terminus forms pyrrolidone carboxylic acid in isoform CHH-II and is free in isoform CHH-I. Produced by the medulla terminalis X-organ in the eyestalks and transported to the sinus gland where they are stored and released.

Its subcellular location is the secreted. Functionally, hormone found in the sinus gland of isopods and decapods which controls the blood sugar level. Has a secretagogue action over the amylase released from the midgut gland. May act as a stress hormone and may be involved in the control of molting and reproduction. The chain is Crustacean hyperglycemic hormone from Cancer pagurus (Rock crab).